Here is a 31-residue protein sequence, read N- to C-terminus: Cyclotide vpub-A (31 aa).

A cross-link (cyclopeptide (Gly-Asn)) is located at residues 1–31 (GVIPCGESCVFIPCISAVIGCSCKSKVCYRN). 3 cysteine pairs are disulfide-bonded: C5–C21, C9–C23, and C14–C28.

This sequence belongs to the cyclotide family. Bracelet subfamily. Post-translationally, this is a cyclic peptide.

Its function is as follows. Probably participates in a plant defense mechanism. The polypeptide is Cyclotide vpub-A (Viola pubescens (Downy yellow violet)).